A 438-amino-acid polypeptide reads, in one-letter code: Methylenetetrahydrofolate--tRNA-(uracil-5-)-methyltransferase TrmFO (438 aa).

An FAD-binding site is contributed by 9-14; the sequence is GGGLAG.

This sequence belongs to the MnmG family. TrmFO subfamily. It depends on FAD as a cofactor.

It localises to the cytoplasm. It catalyses the reaction uridine(54) in tRNA + (6R)-5,10-methylene-5,6,7,8-tetrahydrofolate + NADH + H(+) = 5-methyluridine(54) in tRNA + (6S)-5,6,7,8-tetrahydrofolate + NAD(+). The enzyme catalyses uridine(54) in tRNA + (6R)-5,10-methylene-5,6,7,8-tetrahydrofolate + NADPH + H(+) = 5-methyluridine(54) in tRNA + (6S)-5,6,7,8-tetrahydrofolate + NADP(+). Its function is as follows. Catalyzes the folate-dependent formation of 5-methyl-uridine at position 54 (M-5-U54) in all tRNAs. In Lactobacillus johnsonii (strain CNCM I-12250 / La1 / NCC 533), this protein is Methylenetetrahydrofolate--tRNA-(uracil-5-)-methyltransferase TrmFO.